The following is a 593-amino-acid chain: Metal-response element-binding transcription factor 2 (593 aa).

Residues 1 to 35 (MRDSTGAGNSLVHKRSPLRRNQKTPTSLTKLSLQD) are disordered. Residues 12–22 (VHKRSPLRRNQ) are compositionally biased toward basic residues. A compositionally biased stretch (polar residues) spans 23–32 (KTPTSLTKLS). The residue at position 24 (T24) is a Phosphothreonine. The region spanning 44–101 (CKFEEGQDVLARWSDGLFYLGTIKKINILKQSCFIIFEDSSKSWVLWKDIQTGATGSG) is the Tudor domain. 2 PHD-type zinc fingers span residues 102–157 (EMVC…CVFA) and 201–255 (QCYC…CSSG). A Glycyl lysine isopeptide (Lys-Gly) (interchain with G-Cter in SUMO2) cross-link involves residue K360. Basic and acidic residues predominate over residues 360-374 (KAEKEPEGTSHEFKI). 2 disordered regions span residues 360-411 (KAEK…PYTR) and 424-486 (KESI…TRTG). The span at 445–454 (TAHSSNTSDV) shows a compositional bias: polar residues. S452 is modified (phosphoserine). Residues 459–471 (ASSAKETTSSSIS) are compositionally biased toward low complexity. K522 participates in a covalent cross-link: Glycyl lysine isopeptide (Lys-Gly) (interchain with G-Cter in SUMO2).

It belongs to the Polycomblike family. As to quaternary structure, associates with the PRC2 complex, which consists of the core components EED, EZH1 or EZH2, SUZ12, and RBBP4, and various combinations of accessory subunits including AEBP2, JARID2, PHF19, MTF2 and EPOP. Forms a dimeric PRC2.1 (class 1, PRC-PCL) complex consisting of at least SUZ12, RBBP4, and PHF19 or MTF2; PHF19 and MTF2 stabilize the dimeric structure which enhances PRC2 interaction with chromatin.

The protein resides in the nucleus. In terms of biological role, polycomb group (PcG) protein that specifically binds histone H3 trimethylated at 'Lys-36' (H3K36me3) and recruits the PRC2 complex, thus enhancing PRC2 H3K27me3 methylation activity. Regulates the transcriptional networks during embryonic stem cell self-renewal and differentiation. Promotes recruitment of the PRC2 complex to the inactive X chromosome in differentiating XX ES cells and PRC2 recruitment to target genes in undifferentiated ES cells. Required to repress Hox genes by enhancing H3K27me3 methylation of the PRC2 complex. In some conditions may act as an inhibitor of PRC2 activity: able to activate the CDKN2A gene and promote cellular senescence by suppressing the catalytic activity of the PRC2 complex locally. Binds to the metal-regulating-element (MRE) of MT1A gene promoter. This chain is Metal-response element-binding transcription factor 2 (MTF2), found in Homo sapiens (Human).